The sequence spans 105 residues: Pyrimidine/purine nucleoside phosphorylase (105 aa).

It belongs to the nucleoside phosphorylase PpnP family.

The catalysed reaction is a purine D-ribonucleoside + phosphate = a purine nucleobase + alpha-D-ribose 1-phosphate. It catalyses the reaction adenosine + phosphate = alpha-D-ribose 1-phosphate + adenine. The enzyme catalyses cytidine + phosphate = cytosine + alpha-D-ribose 1-phosphate. It carries out the reaction guanosine + phosphate = alpha-D-ribose 1-phosphate + guanine. The catalysed reaction is inosine + phosphate = alpha-D-ribose 1-phosphate + hypoxanthine. It catalyses the reaction thymidine + phosphate = 2-deoxy-alpha-D-ribose 1-phosphate + thymine. The enzyme catalyses uridine + phosphate = alpha-D-ribose 1-phosphate + uracil. It carries out the reaction xanthosine + phosphate = alpha-D-ribose 1-phosphate + xanthine. Functionally, catalyzes the phosphorolysis of diverse nucleosides, yielding D-ribose 1-phosphate and the respective free bases. Can use uridine, adenosine, guanosine, cytidine, thymidine, inosine and xanthosine as substrates. Also catalyzes the reverse reactions. This chain is Pyrimidine/purine nucleoside phosphorylase, found in Cupriavidus pinatubonensis (strain JMP 134 / LMG 1197) (Cupriavidus necator (strain JMP 134)).